Consider the following 581-residue polypeptide: Arginine--tRNA ligase (581 aa).

A 'HIGH' region motif is present at residues 131–141 (ANPTGPLHVGH).

It belongs to the class-I aminoacyl-tRNA synthetase family. In terms of assembly, monomer.

It localises to the cytoplasm. The enzyme catalyses tRNA(Arg) + L-arginine + ATP = L-arginyl-tRNA(Arg) + AMP + diphosphate. This is Arginine--tRNA ligase from Ruegeria pomeroyi (strain ATCC 700808 / DSM 15171 / DSS-3) (Silicibacter pomeroyi).